The chain runs to 280 residues: Eukaryotic translation initiation factor 3 subunit F-1 (280 aa).

An MPN domain is found at Val-8 to Gly-138.

Belongs to the eIF-3 subunit F family. Component of the eukaryotic translation initiation factor 3 (eIF-3) complex. The eIF-3 complex interacts with pix.

It is found in the cytoplasm. Its function is as follows. Component of the eukaryotic translation initiation factor 3 (eIF-3) complex, which is involved in protein synthesis of a specialized repertoire of mRNAs and, together with other initiation factors, stimulates binding of mRNA and methionyl-tRNAi to the 40S ribosome. The eIF-3 complex specifically targets and initiates translation of a subset of mRNAs involved in cell proliferation. This Drosophila ananassae (Fruit fly) protein is Eukaryotic translation initiation factor 3 subunit F-1.